Here is a 187-residue protein sequence, read N- to C-terminus: Ribosome maturation factor RimP (187 aa).

Belongs to the RimP family.

It is found in the cytoplasm. Functionally, required for maturation of 30S ribosomal subunits. This is Ribosome maturation factor RimP from Phenylobacterium zucineum (strain HLK1).